The sequence spans 99 residues: Co-chaperonin GroES (99 aa).

Belongs to the GroES chaperonin family. In terms of assembly, heptamer of 7 subunits arranged in a ring. Interacts with the chaperonin GroEL.

It localises to the cytoplasm. Its function is as follows. Together with the chaperonin GroEL, plays an essential role in assisting protein folding. The GroEL-GroES system forms a nano-cage that allows encapsulation of the non-native substrate proteins and provides a physical environment optimized to promote and accelerate protein folding. GroES binds to the apical surface of the GroEL ring, thereby capping the opening of the GroEL channel. The sequence is that of Co-chaperonin GroES from Corynebacterium glutamicum (strain R).